Here is a 322-residue protein sequence, read N- to C-terminus: DNA repair and recombination protein RadA (322 aa).

Residue 105–112 (GMYGSGKT) participates in ATP binding.

The protein belongs to the eukaryotic RecA-like protein family.

In terms of biological role, involved in DNA repair and in homologous recombination. Binds and assemble on single-stranded DNA to form a nucleoprotein filament. Hydrolyzes ATP in a ssDNA-dependent manner and promotes DNA strand exchange between homologous DNA molecules. This is DNA repair and recombination protein RadA from Methanococcus maripaludis (strain C5 / ATCC BAA-1333).